The sequence spans 142 residues: Ribosome-binding factor A (142 aa).

The disordered stretch occupies residues 119-142 (ETLGEVQSESDQPTTDETTTVNKT). Residues 123-142 (EVQSESDQPTTDETTTVNKT) show a composition bias toward polar residues.

Belongs to the RbfA family. As to quaternary structure, monomer. Binds 30S ribosomal subunits, but not 50S ribosomal subunits or 70S ribosomes.

It is found in the cytoplasm. Functionally, one of several proteins that assist in the late maturation steps of the functional core of the 30S ribosomal subunit. Associates with free 30S ribosomal subunits (but not with 30S subunits that are part of 70S ribosomes or polysomes). Required for efficient processing of 16S rRNA. May interact with the 5'-terminal helix region of 16S rRNA. The polypeptide is Ribosome-binding factor A (Prochlorococcus marinus (strain MIT 9303)).